Reading from the N-terminus, the 161-residue chain is Anaerobic nitrite reductase Glb1-2 (161 aa).

Residues 9–158 (AFTEEQEALV…LASAIIAEMK (150 aa)) enclose the Globin domain. A Homodimerization motif is present at residues 42–46 (EIAPP). 6 residues coordinate heme b: S52, K66, H70, K100, T104, and H105. A Homodimerization motif is present at residues 112–124 (PEHFEVTKQALLD).

Belongs to the plant globin family. Homodimer. The cofactor is heme b. In terms of tissue distribution, mainly expressed in root nodules and leaves, and, to a lower extent, in roots, stems, flowers and fruits. Accumulates in mature root nodules.

It carries out the reaction Fe(III)-heme b-[protein] + nitric oxide + H2O = Fe(II)-heme b-[protein] + nitrite + 2 H(+). Functionally, phytoglobin that reduces nitrite to nitric oxide (NO) under anoxic conditions (e.g. during flooding or in waterlogged soil) and upon root nodulation. Required for general plant development and during nodulation, especially for the onset of symbiosis. Monitors nitric oxide (NO) levels during early phase of the nitrogen-fixing symbiosis and buffers oxygen in functioning nodules. Necessary for the production of pods. May not function as an oxygen storage or transport protein. Has an unusually high affinity for O(2) through a hexacoordinate heme iron because of a very low dissociation constant. This chain is Anaerobic nitrite reductase Glb1-2, found in Lotus japonicus (Lotus corniculatus var. japonicus).